The primary structure comprises 473 residues: H(+)/Cl(-) exchange transporter ClcA (473 aa).

The Cytoplasmic segment spans residues 1–32 (MNTDTPTFEAQQVVRLRRGDLIRRLLQRDKTP). A helical transmembrane segment spans residues 33-69 (LAILLTAAVVGTVTGLIGVAFEKAVTWVQNLRIGALV). Residues 70-76 (QTADYAI) are Periplasmic-facing. A helical transmembrane segment spans residues 77–100 (LVWPLAFILSALLAMVGYFLVRKF). Residues 101-108 (APEAGGSG) lie on the Cytoplasmic side of the membrane. A Selectivity filter part_1 motif is present at residues 106–110 (GSGIP). Chloride is bound at residue Ser-107. The helical intramembrane region spans 109–116 (IPEIEGAL). Residues 117 to 123 (EELRPVR) lie on the Cytoplasmic side of the membrane. The helical transmembrane segment at 124–141 (WWRVLPVKFVGGMGTLGA) threads the bilayer. Residues 142 to 147 (GMVLGR) lie on the Periplasmic side of the membrane. The Selectivity filter part_2 signature appears at 146–150 (GREGP). A helical transmembrane segment spans residues 148–166 (EGPTVQIGGNIGRMVLDLF). At 167-176 (RMRSAEARHT) the chain is on the cytoplasmic side. 2 intramembrane regions (helical) span residues 177 to 189 (LLATGAAAGLSAA) and 193 to 201 (PLAGILFII). The Cytoplasmic segment spans residues 202–214 (EEMRPQFRYNLIS). A helical transmembrane segment spans residues 215–232 (IKAVFTGVIMSSIVFRIF). The Periplasmic segment spans residues 233-252 (NGEAPIIEVGKLSNAPVNTL). Residues 253–281 (WLYLILGMIFGCVGPLFNHLVLRTQDMFQ) traverse the membrane as a helical segment. The Cytoplasmic portion of the chain corresponds to 282–287 (RFHGGE). The helical transmembrane segment at 288 to 309 (IKKWVLMGGAIGGLCGILGLIE) threads the bilayer. Residues 310–329 (PEAAGGGFNLIPIAAAGNYS) are Periplasmic-facing. The chain crosses the membrane as a helical span at residues 330 to 349 (VGLLLFIFIARVLTTLLCFS). At 350-354 (SGAPG) the chain is on the cytoplasmic side. The short motif at 355 to 359 (GIFAP) is the Selectivity filter part_3 element. Residues 355-376 (GIFAPMLALGTLLGTAFGMAAA) form a helical membrane-spanning segment. Ile-356 and Phe-357 together coordinate chloride. Over 377–386 (ACFPQYHLEA) the chain is Periplasmic. Residues 387–401 (GTFAIAGMGALLAAS) constitute an intramembrane region (helical). Positions 402–404 (VRA) form an intramembrane region, note=Loop between two helices. The helical intramembrane region spans 405-416 (PLTGIVLVLEMT). The segment at residues 417 to 421 (DNYQL) is an intramembrane region (note=Loop between two helices). Residues 422 to 438 (ILPMIITCLGATLLAQF) traverse the membrane as a helical segment. Topologically, residues 439–473 (MGGKPLYSTILARTLAKQDAEQAAKSQRSVAGENT) are cytoplasmic. Tyr-445 contributes to the chloride binding site.

Belongs to the chloride channel (TC 2.A.49) family. ClcA subfamily. In terms of assembly, homodimer.

It is found in the cell inner membrane. The enzyme catalyses 2 chloride(in) + H(+)(out) = 2 chloride(out) + H(+)(in). Proton-coupled chloride transporter. Functions as antiport system and exchanges two chloride ions for 1 proton. Probably acts as an electrical shunt for an outwardly-directed proton pump that is linked to amino acid decarboxylation, as part of the extreme acid resistance (XAR) response. The sequence is that of H(+)/Cl(-) exchange transporter ClcA from Citrobacter koseri (strain ATCC BAA-895 / CDC 4225-83 / SGSC4696).